The chain runs to 480 residues: uncharacterized protein (480 aa).

Lys222 carries the post-translational modification N6-(pyridoxal phosphate)lysine.

This sequence belongs to the Orn/Lys/Arg decarboxylase class-I family. The cofactor is pyridoxal 5'-phosphate.

This is an uncharacterized protein from Bacillus subtilis (strain 168).